Consider the following 342-residue polypeptide: Probable dual-specificity RNA methyltransferase RlmN (342 aa).

The active-site Proton acceptor is the E91. The 230-residue stretch at 97–326 folds into the Radical SAM core domain; that stretch reads YKFGNTACVS…CTVRRELGSD (230 aa). A disulfide bridge links C104 with C331. [4Fe-4S] cluster contacts are provided by C111, C115, and C118. S-adenosyl-L-methionine contacts are provided by residues 157-158, S189, 212-214, and N288; these read GE and SLH. Residue C331 is the S-methylcysteine intermediate of the active site.

This sequence belongs to the radical SAM superfamily. RlmN family. Requires [4Fe-4S] cluster as cofactor.

Its subcellular location is the cytoplasm. The catalysed reaction is adenosine(2503) in 23S rRNA + 2 reduced [2Fe-2S]-[ferredoxin] + 2 S-adenosyl-L-methionine = 2-methyladenosine(2503) in 23S rRNA + 5'-deoxyadenosine + L-methionine + 2 oxidized [2Fe-2S]-[ferredoxin] + S-adenosyl-L-homocysteine. It catalyses the reaction adenosine(37) in tRNA + 2 reduced [2Fe-2S]-[ferredoxin] + 2 S-adenosyl-L-methionine = 2-methyladenosine(37) in tRNA + 5'-deoxyadenosine + L-methionine + 2 oxidized [2Fe-2S]-[ferredoxin] + S-adenosyl-L-homocysteine. Functionally, specifically methylates position 2 of adenine 2503 in 23S rRNA and position 2 of adenine 37 in tRNAs. The sequence is that of Probable dual-specificity RNA methyltransferase RlmN from Caldanaerobacter subterraneus subsp. tengcongensis (strain DSM 15242 / JCM 11007 / NBRC 100824 / MB4) (Thermoanaerobacter tengcongensis).